Consider the following 146-residue polypeptide: UPF0735 ACT domain-containing protein CHY_1913 (146 aa).

Positions 70-145 (TLALNLEHRA…GVSKVELVGQ (76 aa)) constitute an ACT domain.

This sequence belongs to the UPF0735 family.

This Carboxydothermus hydrogenoformans (strain ATCC BAA-161 / DSM 6008 / Z-2901) protein is UPF0735 ACT domain-containing protein CHY_1913.